The primary structure comprises 521 residues: Bifunctional purine biosynthesis protein PurH (521 aa).

Residues 1 to 147 (MAVIKRALIS…KNNRDVTVVV (147 aa)) enclose the MGS-like domain.

This sequence belongs to the PurH family.

The enzyme catalyses (6R)-10-formyltetrahydrofolate + 5-amino-1-(5-phospho-beta-D-ribosyl)imidazole-4-carboxamide = 5-formamido-1-(5-phospho-D-ribosyl)imidazole-4-carboxamide + (6S)-5,6,7,8-tetrahydrofolate. It catalyses the reaction IMP + H2O = 5-formamido-1-(5-phospho-D-ribosyl)imidazole-4-carboxamide. Its pathway is purine metabolism; IMP biosynthesis via de novo pathway; 5-formamido-1-(5-phospho-D-ribosyl)imidazole-4-carboxamide from 5-amino-1-(5-phospho-D-ribosyl)imidazole-4-carboxamide (10-formyl THF route): step 1/1. It participates in purine metabolism; IMP biosynthesis via de novo pathway; IMP from 5-formamido-1-(5-phospho-D-ribosyl)imidazole-4-carboxamide: step 1/1. This chain is Bifunctional purine biosynthesis protein PurH, found in Syntrophotalea carbinolica (strain DSM 2380 / NBRC 103641 / GraBd1) (Pelobacter carbinolicus).